The following is a 491-amino-acid chain: MNTQQLAKLRSIVPEMRRVRHIHFVGIGGAGMGGIAEVLANEGYQISGSDLAPNPVTQQLTSLGATIFFNHRPENVRDASVVVVSSAISSDNPEIVAAHEARIPVIRRAEMLAELMRFRHGIAIAGTHGKTTTTAMVSSIYAEAGLDPTFVNGGLVKAAGVHARLGHSRYLIAEADESDASFLHLQPMVAIVTNIEADHMDTYHGDFENLKQTFINFLHNLPFYGRAVMCVDDPVIRELLPRVGRQTTTYGFSEDADVRVEDYQQIGPQGHFTLLRQGMPDLHVTLNAPGRHNALNAAAAVAVATEEGIDDDAILRALESFQGTGRRFDFLGEFPLEPVNGKAGTAMLVDDYGHHPTEVDATIKAARAGWPDKNLVMLFQPHRYTRTRDLYDDFANVLTQVDALLMLDVYPAGEAPIPGADSRSLCRTIRNRGKIDPILVSDPAQVATMLAPVLTGNDLILVQGAGNVGKIARYLSEIKLKPQIQEEEQHG.

126–132 (GTHGKTT) is an ATP binding site.

Belongs to the MurCDEF family.

Its subcellular location is the cytoplasm. The enzyme catalyses UDP-N-acetyl-alpha-D-muramate + L-alanine + ATP = UDP-N-acetyl-alpha-D-muramoyl-L-alanine + ADP + phosphate + H(+). The protein operates within cell wall biogenesis; peptidoglycan biosynthesis. Functionally, cell wall formation. This Salmonella paratyphi A (strain ATCC 9150 / SARB42) protein is UDP-N-acetylmuramate--L-alanine ligase.